Reading from the N-terminus, the 770-residue chain is DNA ligase 1 (770 aa).

Positions 1–18 are enriched in low complexity; the sequence is MSTGEGTAEQTATGTPAQ. A disordered region spans residues 1-27; the sequence is MSTGEGTAEQTATGTPAQNGRESIPSD. NAD(+) contacts are provided by residues 57–61, 106–107, and Glu-142; these read DAEFD and SL. Lys-144 acts as the N6-AMP-lysine intermediate in catalysis. NAD(+) is bound by residues Arg-165, Glu-202, Lys-318, and Lys-342. Positions 439, 442, 458, and 464 each coordinate Zn(2+). One can recognise a BRCT domain in the interval 657–746; it reads STPRTLEGLT…PAAVGDAAEA (90 aa). Residues 741–770 are disordered; that stretch reads GDAAEADGGDAPEESAALQEEKAAAVEETA. Residues 744–753 are compositionally biased toward acidic residues; that stretch reads AEADGGDAPE. The span at 759 to 770 shows a compositional bias: basic and acidic residues; sequence QEEKAAAVEETA.

Belongs to the NAD-dependent DNA ligase family. LigA subfamily. The cofactor is Mg(2+). It depends on Mn(2+) as a cofactor.

It catalyses the reaction NAD(+) + (deoxyribonucleotide)n-3'-hydroxyl + 5'-phospho-(deoxyribonucleotide)m = (deoxyribonucleotide)n+m + AMP + beta-nicotinamide D-nucleotide.. DNA ligase that catalyzes the formation of phosphodiester linkages between 5'-phosphoryl and 3'-hydroxyl groups in double-stranded DNA using NAD as a coenzyme and as the energy source for the reaction. It is essential for DNA replication and repair of damaged DNA. The polypeptide is DNA ligase 1 (Pseudarthrobacter chlorophenolicus (strain ATCC 700700 / DSM 12829 / CIP 107037 / JCM 12360 / KCTC 9906 / NCIMB 13794 / A6) (Arthrobacter chlorophenolicus)).